We begin with the raw amino-acid sequence, 860 residues long: Alanine--tRNA ligase (860 aa).

Residues His563, His567, Cys665, and His669 each contribute to the Zn(2+) site. Residues 824 to 843 are disordered; that stretch reads VGGKGGGRPDMAQAGGTDSS.

Belongs to the class-II aminoacyl-tRNA synthetase family. It depends on Zn(2+) as a cofactor.

Its subcellular location is the cytoplasm. It carries out the reaction tRNA(Ala) + L-alanine + ATP = L-alanyl-tRNA(Ala) + AMP + diphosphate. Its function is as follows. Catalyzes the attachment of alanine to tRNA(Ala) in a two-step reaction: alanine is first activated by ATP to form Ala-AMP and then transferred to the acceptor end of tRNA(Ala). Also edits incorrectly charged Ser-tRNA(Ala) and Gly-tRNA(Ala) via its editing domain. The polypeptide is Alanine--tRNA ligase (Vibrio vulnificus (strain YJ016)).